The chain runs to 289 residues: D-psicose 3-epimerase (289 aa).

Substrate is bound by residues tyrosine 6 and alanine 107. Glutamate 150 (proton donor/acceptor) is an active-site residue. A Mn(2+)-binding site is contributed by glutamate 150. Residues glutamate 156 and 183 to 186 (DTFH) each bind substrate. Residues aspartate 183 and histidine 209 each contribute to the Mn(2+) site. Arginine 215 is a substrate binding site. The active-site Proton donor/acceptor is glutamate 244. Glutamate 244 lines the Mn(2+) pocket.

It belongs to the hyi family. Homotetramer. Mn(2+) is required as a cofactor. It depends on Co(2+) as a cofactor.

The enzyme catalyses D-allulose = keto-D-fructose. Its activity is regulated as follows. Inhibited by Zn(2+) and Cu(2+). Involved in the biosynthesis of D-psicose. Catalyzes the reversible epimerization of D-fructose at the C3 position to yield D-psicose. The enzyme is highly specific for D-psicose and shows very low activity with D-tagatose. The substrate specificity decreases in the following order: D-fructose, D-tagatose, D-ribulose, D-xylulose, and D-sorbose. It shows a higher level of activity for cis ketoses than for trans-ketoses. The polypeptide is D-psicose 3-epimerase (dpe) (Agrobacterium fabrum (strain C58 / ATCC 33970) (Agrobacterium tumefaciens (strain C58))).